The sequence spans 625 residues: Alpha-1,3-galactosidase A (625 aa).

The first 32 residues, 1–32 (MAHGCSGGAMSRFVFLGVALALLGGATSPAAA), serve as a signal peptide directing secretion. 5 PbH1 repeats span residues 342–364 (KGKV…NIHG), 460–482 (TPSV…LVTT), 483–505 (RKPV…YVSA), 516–537 (VADL…IFVE), and 573–611 (VGGF…RIAR).

Belongs to the glycosyl hydrolase 110 family. A subfamily.

The catalysed reaction is Hydrolysis of terminal, non-reducing branched (1-&gt;3)-alpha-D-galactosidic residues, producing free D-galactose.. It carries out the reaction Hydrolysis of terminal, non-reducing alpha-D-galactose residues in alpha-D-galactosides, including galactose oligosaccharides, galactomannans and galactolipids.. Functionally, alpha-galactosidase that specifically removes branched alpha-1,3-linked galactose residues present in blood group B antigens. Has no activity toward linear alpha-1,3-linked galactose residues. This Streptomyces avermitilis (strain ATCC 31267 / DSM 46492 / JCM 5070 / NBRC 14893 / NCIMB 12804 / NRRL 8165 / MA-4680) protein is Alpha-1,3-galactosidase A (glaA).